The chain runs to 240 residues: Mediator of RNA polymerase II transcription subunit 19-B (240 aa).

The segment covering 1 to 14 has biased composition (polar residues); the sequence is MTEIFSSLYGQPDS. Disordered stretches follow at residues 1-29 and 168-240; these read MTEIFSSLYGQPDSQGPAGPSALGFGSGK and PKKK…SSLR. 2 stretches are compositionally biased toward basic residues: residues 168 to 180 and 209 to 221; these read PKKKNKHKHKHHR and KKKKKDKKKKKNR.

It belongs to the Mediator complex subunit 19 family. Component of the Mediator complex.

It is found in the nucleus. Functionally, component of the Mediator complex, a coactivator involved in the regulated transcription of nearly all RNA polymerase II-dependent genes. Mediator functions as a bridge to convey information from gene-specific regulatory proteins to the basal RNA polymerase II transcription machinery. Mediator is recruited to promoters by direct interactions with regulatory proteins and serves as a scaffold for the assembly of a functional preinitiation complex with RNA polymerase II and the general transcription factors. The chain is Mediator of RNA polymerase II transcription subunit 19-B (med19b) from Danio rerio (Zebrafish).